The following is a 365-amino-acid chain: Flagellar P-ring protein 2 (365 aa).

An N-terminal signal peptide occupies residues 1-19 (MKKWIVMASLLLAALPAMS).

The protein belongs to the FlgI family. As to quaternary structure, the basal body constitutes a major portion of the flagellar organelle and consists of four rings (L,P,S, and M) mounted on a central rod.

Its subcellular location is the periplasm. It localises to the bacterial flagellum basal body. Its function is as follows. Assembles around the rod to form the L-ring and probably protects the motor/basal body from shearing forces during rotation. This Chromobacterium violaceum (strain ATCC 12472 / DSM 30191 / JCM 1249 / CCUG 213 / NBRC 12614 / NCIMB 9131 / NCTC 9757 / MK) protein is Flagellar P-ring protein 2.